The primary structure comprises 282 residues: Ribonuclease 3 (282 aa).

Residues 18–141 (FVAFFKSLNI…LVAAIYEDLG (124 aa)) enclose the RNase III domain. Residue glutamate 59 coordinates Mg(2+). Aspartate 63 is an active-site residue. Residues aspartate 127 and glutamate 130 each contribute to the Mg(2+) site. Glutamate 130 is a catalytic residue.

It belongs to the ribonuclease III family. Homodimer. Mg(2+) is required as a cofactor.

The protein localises to the cytoplasm. It carries out the reaction Endonucleolytic cleavage to 5'-phosphomonoester.. Functionally, digests double-stranded RNA. Involved in the processing of primary rRNA transcript to yield the immediate precursors to the large and small rRNAs (23S and 16S). Processes some mRNAs, and tRNAs when they are encoded in the rRNA operon. Processes pre-crRNA and tracrRNA of type II CRISPR loci if present in the organism. The protein is Ribonuclease 3 of Mycoplasmoides pneumoniae (strain ATCC 15531 / DSM 23978 / CIP 103766 / NBRC 14401 / NCTC 10119 / FH) (Mycoplasma pneumoniae).